We begin with the raw amino-acid sequence, 344 residues long: Photosystem II protein D1 (344 aa).

3 helical membrane passes run 29 to 46 (YIGWFGVLMVPTLLTATT), 118 to 133 (HFFIGVCSYMGREWEL), and 142 to 156 (WIAVAYSAPVAAATA). His118 is a chlorophyll a binding site. Tyr126 is a pheophytin a binding site. The [CaMn4O5] cluster site is built by Asp170 and Glu189. The helical transmembrane segment at 197 to 218 (FHMLGVAGVFGGSLFSAMHGSL) threads the bilayer. His198 serves as a coordination point for chlorophyll a. A quinone-binding positions include His215 and 264-265 (SF). A Fe cation-binding site is contributed by His215. Fe cation is bound at residue His272. The helical transmembrane segment at 274-288 (FLAAWPVIGIWFTAM) threads the bilayer. Residues His332, Glu333, Asp342, and Ala344 each contribute to the [CaMn4O5] cluster site.

It belongs to the reaction center PufL/M/PsbA/D family. PSII is composed of 1 copy each of membrane proteins PsbA, PsbB, PsbC, PsbD, PsbE, PsbF, PsbH, PsbI, PsbJ, PsbK, PsbL, PsbM, PsbT, PsbY, PsbZ, Psb30/Ycf12, at least 3 peripheral proteins of the oxygen-evolving complex and a large number of cofactors. It forms dimeric complexes. The D1/D2 heterodimer binds P680, chlorophylls that are the primary electron donor of PSII, and subsequent electron acceptors. It shares a non-heme iron and each subunit binds pheophytin, quinone, additional chlorophylls, carotenoids and lipids. D1 provides most of the ligands for the Mn4-Ca-O5 cluster of the oxygen-evolving complex (OEC). There is also a Cl(-1) ion associated with D1 and D2, which is required for oxygen evolution. The PSII complex binds additional chlorophylls, carotenoids and specific lipids. is required as a cofactor. Tyr-161 forms a radical intermediate that is referred to as redox-active TyrZ, YZ or Y-Z.

Its subcellular location is the plastid. The protein localises to the chloroplast thylakoid membrane. It carries out the reaction 2 a plastoquinone + 4 hnu + 2 H2O = 2 a plastoquinol + O2. Its function is as follows. Photosystem II (PSII) is a light-driven water:plastoquinone oxidoreductase that uses light energy to abstract electrons from H(2)O, generating O(2) and a proton gradient subsequently used for ATP formation. It consists of a core antenna complex that captures photons, and an electron transfer chain that converts photonic excitation into a charge separation. The D1/D2 (PsbA/PsbD) reaction center heterodimer binds P680, the primary electron donor of PSII as well as several subsequent electron acceptors. This Bigelowiella natans (Pedinomonas minutissima) protein is Photosystem II protein D1.